The primary structure comprises 1215 residues: Cellulose synthase-like protein D4 (1215 aa).

2 disordered regions span residues 24–46 (GGDA…SLGS) and 206–231 (SDTD…ERDQ). The segment covering 207–222 (DTDESDSVTDDDDDEA) has biased composition (acidic residues). Transmembrane regions (helical) follow at residues 321-341 (AILS…GFFL) and 352-372 (AVWL…SWLL). Residues Asp-452 and Asp-905 contribute to the active site. The next 6 membrane-spanning stretches (helical) occupy residues 988–1008 (VFLL…KFIV), 1014–1034 (TFLA…LLEI), 1060–1080 (PAAV…SFTL), 1114–1134 (LMVP…VAAA), 1147–1167 (LLGG…FAKG), and 1177–1197 (TIVF…WVYI).

It belongs to the glycosyltransferase 2 family. Plant cellulose synthase-like D subfamily.

It is found in the golgi apparatus membrane. Thought to be a Golgi-localized beta-glycan synthase that polymerize the backbones of noncellulosic polysaccharides (hemicelluloses) of plant cell wall. The sequence is that of Cellulose synthase-like protein D4 (CSLD4) from Oryza sativa subsp. japonica (Rice).